A 710-amino-acid polypeptide reads, in one-letter code: Effector protein AvrPphD (710 aa).

Over residues 1–15 (MNPLRSIQHNITTPP) the composition is skewed to polar residues. 3 disordered regions span residues 1 to 36 (MNPL…HPKR), 136 to 155 (ISFD…SVLS), and 173 to 207 (SSSL…DSGS).

It localises to the secreted. Effector protein involved in non-host recognition and able to elicit hypersensitive response (HR). This is Effector protein AvrPphD (avrPphD) from Pseudomonas savastanoi pv. phaseolicola (Pseudomonas syringae pv. phaseolicola).